A 261-amino-acid polypeptide reads, in one-letter code: NAD(P)H-quinone oxidoreductase subunit K, chloroplastic (261 aa).

[4Fe-4S] cluster is bound by residues C43, C44, C108, and C139.

Belongs to the complex I 20 kDa subunit family. In terms of assembly, NDH is composed of at least 16 different subunits, 5 of which are encoded in the nucleus. It depends on [4Fe-4S] cluster as a cofactor.

It localises to the plastid. It is found in the chloroplast thylakoid membrane. It catalyses the reaction a plastoquinone + NADH + (n+1) H(+)(in) = a plastoquinol + NAD(+) + n H(+)(out). The enzyme catalyses a plastoquinone + NADPH + (n+1) H(+)(in) = a plastoquinol + NADP(+) + n H(+)(out). NDH shuttles electrons from NAD(P)H:plastoquinone, via FMN and iron-sulfur (Fe-S) centers, to quinones in the photosynthetic chain and possibly in a chloroplast respiratory chain. The immediate electron acceptor for the enzyme in this species is believed to be plastoquinone. Couples the redox reaction to proton translocation, and thus conserves the redox energy in a proton gradient. This is NAD(P)H-quinone oxidoreductase subunit K, chloroplastic from Cycas taitungensis (Prince sago).